A 790-amino-acid chain; its full sequence is MKSNPGITVIKQNASNVMEKTLKEEGQSRSNSEDSDDDKPLSHKLSSGALNGNSHHIRMGSNLSCPSPYTSPKPRIIKGPEDEMLLSSELQLNAGASNAESSDSDESKPLASELEDPSSSLNKRPLIQPKNSDPSPSKKAKLSEPSAPTNRKLKTAEQEEAAADDDPSISNRNKKSTTPASKVSDKKKRPDVSASVNKVDFSKSLKVPLVLVKGRNGQPLVHNGVIFPPLYKPHGVKMLYRENPVDLTPEQEEVATMFAVMLETEYMTKPKFRENFMSDWRKILGEKHIIQNLEDCDFTPIYEWHQREKEKKKQMSTDEKKAIKEGKDETRKEKYMWAVVDGMSREKVGNFRVGTTRVVQRSWRASKDPQVKKNVYSQIDITINIGKDAPIPEPPIPGERWKEIRHDNTVTWLAFWNDPINPKEFKYVFLAASSSLKGKVTREKYEKSRKLKDYIEGIRAAAYTKDFASKDSKKRQIAVATYLIDKLALRAGNEKDDDEADTVGCCTLKVENVETKRPNILKFDFLGKDSIRYQNEVEVEPRVFSAIEQFRSGKEGGDDLFDQLDTSKLNAHLKELMPGLTAKVFRTYNASITLDEMVRCKLLSRETKGGDVAEKVVVYQHANKEVAIICNHQRTVSKSHSAQMVRLNEKIEELKGLLKELQEDLTRVNKGKPPLKNSDGKPKRNLNLKRYKGKLLKLIQKLRKWSETRRLSVTKKIAQTNTKIEKMERDKETKEDLKTVALGTSKINYLDPRITVAWCKRHDVPIEKIFNKSLLAKFAWAMDVVLIFRF.

Composition is skewed to polar residues over residues 1-18, 44-54, and 61-70; these read MKSNPGITVIKQNASNVM, KLSSGALNGNS, and SNLSCPSPYT. The segment at 1 to 196 is disordered; it reads MKSNPGITVI…KKRPDVSASV (196 aa). Residues 158–167 are compositionally biased toward acidic residues; sequence QEEAAADDDP. Over residues 168–181 the composition is skewed to polar residues; the sequence is SISNRNKKSTTPAS. Interaction with DNA regions lie at residues 426–427, 490–495, and 581–583; these read KY, RAGNEK, and TAK. Positions 433-790 constitute a Topo IB-type catalytic domain; the sequence is SSSLKGKVTR…AMDVVLIFRF (358 aa). The active-site O-(3'-phospho-DNA)-tyrosine intermediate is the Tyr749.

This sequence belongs to the type IB topoisomerase family.

It localises to the nucleus. The enzyme catalyses ATP-independent breakage of single-stranded DNA, followed by passage and rejoining.. Functionally, releases the supercoiling and torsional tension of DNA introduced during the DNA replication and transcription by transiently cleaving and rejoining one strand of the DNA duplex. Introduces a single-strand break via transesterification at a target site in duplex DNA. The scissile phosphodiester is attacked by the catalytic tyrosine of the enzyme, resulting in the formation of a DNA-(3'-phosphotyrosyl)-enzyme intermediate and the expulsion of a 5'-OH DNA strand. The free DNA strand then rotates around the intact phosphodiester bond on the opposing strand, thus removing DNA supercoils. Finally, in the religation step, the DNA 5'-OH attacks the covalent intermediate to expel the active-site tyrosine and restore the DNA phosphodiester backbone. The protein is DNA topoisomerase 1 (TOP1) of Daucus carota (Wild carrot).